Here is a 706-residue protein sequence, read N- to C-terminus: Semenogelin-2 (706 aa).

The N-terminal stretch at methionine 1–glycine 23 is a signal peptide. Disordered stretches follow at residues lysine 25–serine 62, lysine 131–phenylalanine 156, and asparagine 276–histidine 678. Positions glycine 50–serine 59 are enriched in basic and acidic residues. Polar residues predominate over residues histidine 137–serine 151. The span at threonine 297 to serine 308 shows a compositional bias: basic and acidic residues. Residues lysine 329–glutamine 339 show a composition bias toward polar residues. Residues aspartate 340 to lysine 349 show a composition bias toward basic and acidic residues. The segment covering lysine 389–glutamine 399 has biased composition (polar residues). A compositionally biased stretch (basic and acidic residues) spans aspartate 400–lysine 409. Over residues lysine 449–glutamine 459 the composition is skewed to polar residues. A compositionally biased stretch (basic and acidic residues) spans aspartate 460–lysine 469. Positions lysine 509–glutamine 519 are enriched in polar residues. A compositionally biased stretch (basic and acidic residues) spans aspartate 520–lysine 529. A compositionally biased stretch (polar residues) spans lysine 569–glutamine 579. The span at aspartate 580 to lysine 589 shows a compositional bias: basic and acidic residues. Composition is skewed to polar residues over residues lysine 611–threonine 622 and serine 630–lysine 653. The span at serine 654–tyrosine 670 shows a compositional bias: basic and acidic residues.

The protein belongs to the semenogelin family. Interacts with SERPINA5.

The protein resides in the secreted. In terms of biological role, participates in the formation of a gel matrix (sperm coagulum) entrapping the accessory gland secretions and ejaculated spermatozoa. This is Semenogelin-2 (SEMG2) from Macaca mulatta (Rhesus macaque).